We begin with the raw amino-acid sequence, 318 residues long: L-lactate dehydrogenase (318 aa).

NAD(+) is bound by residues Val-18, Asp-39, Lys-44, Tyr-69, and 83–84 (GA). 2 residues coordinate substrate: Gln-86 and Arg-92. NAD(+) contacts are provided by residues Ser-105, 122–124 (VSN), and Ser-147. 124–127 (NPVD) contacts substrate. A substrate-binding site is contributed by 152–155 (DTSR). Catalysis depends on His-179, which acts as the Proton acceptor. Tyr-225 carries the post-translational modification Phosphotyrosine. Thr-234 contributes to the substrate binding site.

It belongs to the LDH/MDH superfamily. LDH family. Homotetramer.

Its subcellular location is the cytoplasm. The catalysed reaction is (S)-lactate + NAD(+) = pyruvate + NADH + H(+). It functions in the pathway fermentation; pyruvate fermentation to lactate; (S)-lactate from pyruvate: step 1/1. Functionally, catalyzes the conversion of lactate to pyruvate. The polypeptide is L-lactate dehydrogenase (Clostridium botulinum (strain Okra / Type B1)).